The sequence spans 139 residues: Putative pre-16S rRNA nuclease (139 aa).

This sequence belongs to the YqgF nuclease family.

The protein localises to the cytoplasm. Its function is as follows. Could be a nuclease involved in processing of the 5'-end of pre-16S rRNA. The sequence is that of Putative pre-16S rRNA nuclease from Streptococcus equi subsp. zooepidemicus (strain H70).